The chain runs to 461 residues: Bifunctional protein HldE (461 aa).

A ribokinase region spans residues 1–312 (MLEFLSQQKP…IKSFNRVDFE (312 aa)). Residue 191 to 194 (NKKE) participates in ATP binding. Asp259 is an active-site residue. The segment at 334-461 (FTNGCFDIVH…KIIEKIKDKK (128 aa)) is cytidylyltransferase.

In the N-terminal section; belongs to the carbohydrate kinase PfkB family. The protein in the C-terminal section; belongs to the cytidylyltransferase family. Homodimer.

It carries out the reaction D-glycero-beta-D-manno-heptose 7-phosphate + ATP = D-glycero-beta-D-manno-heptose 1,7-bisphosphate + ADP + H(+). The catalysed reaction is D-glycero-beta-D-manno-heptose 1-phosphate + ATP + H(+) = ADP-D-glycero-beta-D-manno-heptose + diphosphate. Its pathway is nucleotide-sugar biosynthesis; ADP-L-glycero-beta-D-manno-heptose biosynthesis; ADP-L-glycero-beta-D-manno-heptose from D-glycero-beta-D-manno-heptose 7-phosphate: step 1/4. It participates in nucleotide-sugar biosynthesis; ADP-L-glycero-beta-D-manno-heptose biosynthesis; ADP-L-glycero-beta-D-manno-heptose from D-glycero-beta-D-manno-heptose 7-phosphate: step 3/4. Its function is as follows. Catalyzes the phosphorylation of D-glycero-D-manno-heptose 7-phosphate at the C-1 position to selectively form D-glycero-beta-D-manno-heptose-1,7-bisphosphate. In terms of biological role, catalyzes the ADP transfer from ATP to D-glycero-beta-D-manno-heptose 1-phosphate, yielding ADP-D-glycero-beta-D-manno-heptose. The chain is Bifunctional protein HldE from Campylobacter jejuni subsp. jejuni serotype O:6 (strain 81116 / NCTC 11828).